We begin with the raw amino-acid sequence, 282 residues long: Putative hydrolase Bcep18194_B0137 (282 aa).

Residues Glu124, Glu126, and Asp155 each contribute to the Mg(2+) site.

Belongs to the FAH family. The cofactor is Mg(2+).

The chain is Putative hydrolase Bcep18194_B0137 from Burkholderia lata (strain ATCC 17760 / DSM 23089 / LMG 22485 / NCIMB 9086 / R18194 / 383).